An 844-amino-acid chain; its full sequence is Probable inorganic carbon transporter subunit DabA 1 (844 aa).

Residues C359, D361, H543, and C558 each contribute to the Zn(2+) site.

The protein belongs to the inorganic carbon transporter (TC 9.A.2) DabA family. In terms of assembly, forms a complex with DabB. It depends on Zn(2+) as a cofactor.

It localises to the cell inner membrane. Functionally, part of an energy-coupled inorganic carbon pump. This chain is Probable inorganic carbon transporter subunit DabA 1, found in Bradyrhizobium sp. (strain BTAi1 / ATCC BAA-1182).